The sequence spans 977 residues: Vacuolar membrane protease (977 aa).

Residues 1 to 17 (MARSRTAGRCNPFAFYR) lie on the Cytoplasmic side of the membrane. A helical membrane pass occupies residues 18–38 (VPVTVFVTLIYVALLAPIIVV). Over 39–383 (HHILPAVPES…AFAVFEIHTL (345 aa)) the chain is Vacuolar. 2 N-linked (GlcNAc...) asparagine glycosylation sites follow: Asn-113 and Asn-116. Positions 166 and 178 each coordinate Zn(2+). Residue Glu-212 is the Proton acceptor of the active site. Zn(2+) is bound by residues Glu-213, Glu-238, and His-311. A helical membrane pass occupies residues 384–404 (FALSVTLLIVGPLTLFITSII). Over 405-438 (LANQDRMYLFGISVPVDDGFGSVPLRGWRGFFRF) the chain is Cytoplasmic. Residues 439-459 (PFIFGSTTASVVALAYLMAKI) form a helical membrane-spanning segment. Topologically, residues 460 to 469 (NPMIAHSSEY) are vacuolar. A helical membrane pass occupies residues 470–490 (AVWSMMISAWVFVAWFLSRIA). The Cytoplasmic portion of the chain corresponds to 491 to 500 (NFARPSALHR). Residues 501-521 (IYVLTWMFLLTWVLLVITTVY) traverse the membrane as a helical segment. Residues 522 to 525 (ENRD) lie on the Vacuolar side of the membrane. The chain crosses the membrane as a helical span at residues 526 to 546 (GIASGYFVIFYAFGTFMATWI). Residues 547–659 (SYLELFSLPK…WSANLPKWTW (113 aa)) lie on the Cytoplasmic side of the membrane. Over residues 566 to 576 (GQISSRPTSLG) the composition is skewed to polar residues. Residues 566 to 604 (GQISSRPTSLGGSRLLTPSGESVGQHPEDEEPTESTSLL) are disordered. The helical transmembrane segment at 660 to 680 (ILQFLLIAPIVIILIGQLGLL) threads the bilayer. Residues 681-696 (ITSAIHQTMQDGSSTL) are Vacuolar-facing. Residues 697 to 717 (VPYLIIALLTTFLFMPTLPFI) traverse the membrane as a helical segment. Topologically, residues 718 to 726 (HRYTYHIPT) are cytoplasmic. A helical membrane pass occupies residues 727–747 (FLFLIFVATLVYNLVAFPFSG). Topologically, residues 748–977 (NNRTKLFFLQ…LVKGSRSFEV (230 aa)) are vacuolar. Asn-749 and Asn-791 each carry an N-linked (GlcNAc...) asparagine glycan.

This sequence belongs to the peptidase M28 family. Zn(2+) is required as a cofactor.

The protein localises to the vacuole membrane. May be involved in vacuolar sorting and osmoregulation. The sequence is that of Vacuolar membrane protease from Talaromyces marneffei (strain ATCC 18224 / CBS 334.59 / QM 7333) (Penicillium marneffei).